Reading from the N-terminus, the 339-residue chain is Glyceraldehyde-3-phosphate dehydrogenase (339 aa).

Residues 12 to 13, Asp34, and Lys79 contribute to the NAD(+) site; that span reads RI. D-glyceraldehyde 3-phosphate contacts are provided by residues 150-152, Thr181, 210-211, and Arg233; these read SCT and TG. Residue Cys151 is the Nucleophile of the active site. Residue Asn316 participates in NAD(+) binding.

Belongs to the glyceraldehyde-3-phosphate dehydrogenase family. Homotetramer.

It localises to the cytoplasm. It catalyses the reaction D-glyceraldehyde 3-phosphate + phosphate + NAD(+) = (2R)-3-phospho-glyceroyl phosphate + NADH + H(+). It participates in carbohydrate degradation; glycolysis; pyruvate from D-glyceraldehyde 3-phosphate: step 1/5. This chain is Glyceraldehyde-3-phosphate dehydrogenase (GPD), found in Cryptococcus neoformans var. neoformans serotype D (strain B-3501A) (Filobasidiella neoformans).